Consider the following 903-residue polypeptide: Valine--tRNA ligase (903 aa).

Polar residues predominate over residues 1–15 (MVCVTDQNNETTSQN). Residues 1-21 (MVCVTDQNNETTSQNRADKLP) are disordered. The 'HIGH' region motif lies at 61–71 (PNVTGQLHMGH). The 'KMSKS' region signature appears at 552–556 (KMSKS). Lys555 lines the ATP pocket. A coiled-coil region spans residues 836–903 (TVDVAAERKR…RINKRLEELA (68 aa)).

It belongs to the class-I aminoacyl-tRNA synthetase family. ValS type 1 subfamily. Monomer.

Its subcellular location is the cytoplasm. It carries out the reaction tRNA(Val) + L-valine + ATP = L-valyl-tRNA(Val) + AMP + diphosphate. In terms of biological role, catalyzes the attachment of valine to tRNA(Val). As ValRS can inadvertently accommodate and process structurally similar amino acids such as threonine, to avoid such errors, it has a 'posttransfer' editing activity that hydrolyzes mischarged Thr-tRNA(Val) in a tRNA-dependent manner. This is Valine--tRNA ligase from Corynebacterium glutamicum (strain ATCC 13032 / DSM 20300 / JCM 1318 / BCRC 11384 / CCUG 27702 / LMG 3730 / NBRC 12168 / NCIMB 10025 / NRRL B-2784 / 534).